The chain runs to 73 residues: Large ribosomal subunit protein bL31 (73 aa).

This sequence belongs to the bacterial ribosomal protein bL31 family. Type A subfamily. As to quaternary structure, part of the 50S ribosomal subunit.

Binds the 23S rRNA. In Bartonella henselae (strain ATCC 49882 / DSM 28221 / CCUG 30454 / Houston 1) (Rochalimaea henselae), this protein is Large ribosomal subunit protein bL31.